Consider the following 105-residue polypeptide: Integration host factor subunit alpha (105 aa).

This sequence belongs to the bacterial histone-like protein family. As to quaternary structure, heterodimer of an alpha and a beta chain.

This protein is one of the two subunits of integration host factor, a specific DNA-binding protein that functions in genetic recombination as well as in transcriptional and translational control. This is Integration host factor subunit alpha from Azorhizobium caulinodans (strain ATCC 43989 / DSM 5975 / JCM 20966 / LMG 6465 / NBRC 14845 / NCIMB 13405 / ORS 571).